Reading from the N-terminus, the 1177-residue chain is Dynein axonemal assembly factor 9 (1177 aa).

The segment at 1–27 (MDVYPPRRQGLPRARSPGGSSRGSPSV) is disordered. Residues 11 to 27 (LPRARSPGGSSRGSPSV) show a composition bias toward low complexity.

Interacts with ARL3.

May act as an effector for ARL3. In Homo sapiens (Human), this protein is Dynein axonemal assembly factor 9.